Reading from the N-terminus, the 135-residue chain is Allatotropins (135 aa).

Positions 1–22 (MNFSMHLVLAVAAAACLCVVTA) are cleaved as a signal peptide. Position 51 is a phenylalanine amide (phenylalanine 51). Residues 55-135 (DRPHTRAELY…SSEELLRNVA (81 aa)) constitute a propeptide that is removed on maturation.

Allatotropin: Expressed in corpora cardiaca (CC), corpora allata (CA), antennal lobe (AL) and gnathal ganglion (GNG) (protein level). Expression in AL detected in all animals, expression in GNG detected in most animals and expression in CA and CC detected in few animals (at protein level). Allatotropin-PP-1: Expressed in corpora cardiaca (CC), corpora allata (CA), antennal lobe (AL) and gnathal ganglion (GNG) (at protein level). Expression in AL detected in all animals and expression in GNG, CA and CC detected in some animals (at protein level).

The protein localises to the secreted. Its function is as follows. Neuropeptide stimulator of juvenile hormone synthesis. The chain is Allatotropins from Agrotis ipsilon (Black cutworm moth).